Here is a 290-residue protein sequence, read N- to C-terminus: Lipoyl synthase (290 aa).

Positions 36, 41, 47, 62, 66, 69, and 275 each coordinate [4Fe-4S] cluster. The Radical SAM core domain maps to 48-264; the sequence is FSKKTATFMI…KEEALKIGFS (217 aa).

The protein belongs to the radical SAM superfamily. Lipoyl synthase family. The cofactor is [4Fe-4S] cluster.

Its subcellular location is the cytoplasm. It carries out the reaction [[Fe-S] cluster scaffold protein carrying a second [4Fe-4S](2+) cluster] + N(6)-octanoyl-L-lysyl-[protein] + 2 oxidized [2Fe-2S]-[ferredoxin] + 2 S-adenosyl-L-methionine + 4 H(+) = [[Fe-S] cluster scaffold protein] + N(6)-[(R)-dihydrolipoyl]-L-lysyl-[protein] + 4 Fe(3+) + 2 hydrogen sulfide + 2 5'-deoxyadenosine + 2 L-methionine + 2 reduced [2Fe-2S]-[ferredoxin]. It participates in protein modification; protein lipoylation via endogenous pathway; protein N(6)-(lipoyl)lysine from octanoyl-[acyl-carrier-protein]: step 2/2. Its function is as follows. Catalyzes the radical-mediated insertion of two sulfur atoms into the C-6 and C-8 positions of the octanoyl moiety bound to the lipoyl domains of lipoate-dependent enzymes, thereby converting the octanoylated domains into lipoylated derivatives. This chain is Lipoyl synthase, found in Alkaliphilus metalliredigens (strain QYMF).